The following is a 226-amino-acid chain: UPF0173 metal-dependent hydrolase GWCH70_2696 (226 aa).

The protein belongs to the UPF0173 family.

The sequence is that of UPF0173 metal-dependent hydrolase GWCH70_2696 from Geobacillus sp. (strain WCH70).